The primary structure comprises 331 residues: Holliday junction branch migration complex subunit RuvB (331 aa).

A large ATPase domain (RuvB-L) region spans residues 1–186 (MAKTMMQDRL…FGIVQRLEFY (186 aa)). ATP is bound by residues isoleucine 25, arginine 26, glycine 67, lysine 70, threonine 71, threonine 72, 133-135 (EDF), arginine 176, tyrosine 186, and arginine 223. Residue threonine 71 coordinates Mg(2+). The small ATPAse domain (RuvB-S) stretch occupies residues 187–257 (NIADLTTIVS…IAGSALDMLA (71 aa)). Residues 260–331 (RRGLDHLDRR…LTQMAIDQMV (72 aa)) are head domain (RuvB-H). Residues arginine 296, arginine 315, and arginine 320 each coordinate DNA.

The protein belongs to the RuvB family. In terms of assembly, homohexamer. Forms an RuvA(8)-RuvB(12)-Holliday junction (HJ) complex. HJ DNA is sandwiched between 2 RuvA tetramers; dsDNA enters through RuvA and exits via RuvB. An RuvB hexamer assembles on each DNA strand where it exits the tetramer. Each RuvB hexamer is contacted by two RuvA subunits (via domain III) on 2 adjacent RuvB subunits; this complex drives branch migration. In the full resolvosome a probable DNA-RuvA(4)-RuvB(12)-RuvC(2) complex forms which resolves the HJ.

The protein resides in the cytoplasm. It catalyses the reaction ATP + H2O = ADP + phosphate + H(+). Its function is as follows. The RuvA-RuvB-RuvC complex processes Holliday junction (HJ) DNA during genetic recombination and DNA repair, while the RuvA-RuvB complex plays an important role in the rescue of blocked DNA replication forks via replication fork reversal (RFR). RuvA specifically binds to HJ cruciform DNA, conferring on it an open structure. The RuvB hexamer acts as an ATP-dependent pump, pulling dsDNA into and through the RuvAB complex. RuvB forms 2 homohexamers on either side of HJ DNA bound by 1 or 2 RuvA tetramers; 4 subunits per hexamer contact DNA at a time. Coordinated motions by a converter formed by DNA-disengaged RuvB subunits stimulates ATP hydrolysis and nucleotide exchange. Immobilization of the converter enables RuvB to convert the ATP-contained energy into a lever motion, pulling 2 nucleotides of DNA out of the RuvA tetramer per ATP hydrolyzed, thus driving DNA branch migration. The RuvB motors rotate together with the DNA substrate, which together with the progressing nucleotide cycle form the mechanistic basis for DNA recombination by continuous HJ branch migration. Branch migration allows RuvC to scan DNA until it finds its consensus sequence, where it cleaves and resolves cruciform DNA. In Psychrobacter arcticus (strain DSM 17307 / VKM B-2377 / 273-4), this protein is Holliday junction branch migration complex subunit RuvB.